The primary structure comprises 200 residues: Lipopolysaccharide core heptose(II)-phosphate phosphatase (200 aa).

An N-terminal signal peptide occupies residues 1–25 (MLAFCRSSLKSKKYFIILLALAAIA).

This sequence belongs to the phosphoglycerate mutase family. Ais subfamily.

The protein resides in the periplasm. The protein operates within bacterial outer membrane biogenesis; lipopolysaccharide metabolism. Catalyzes the dephosphorylation of heptose(II) of the outer membrane lipopolysaccharide core. This Escherichia coli O157:H7 (strain EC4115 / EHEC) protein is Lipopolysaccharide core heptose(II)-phosphate phosphatase.